Here is a 144-residue protein sequence, read N- to C-terminus: F420-non-reducing hydrogenase vhc iron-sulfur subunit D (144 aa).

Belongs to the MvhD/VhuD family. The F420-non-reducing hydrogenase vhc is composed of three subunits; VhcA, VhcD and VhcG. [2Fe-2S] cluster serves as cofactor.

The sequence is that of F420-non-reducing hydrogenase vhc iron-sulfur subunit D (vhcD) from Methanococcus voltae.